Consider the following 319-residue polypeptide: 2-dehydropantoate 2-reductase (319 aa).

Residues 10-15 and Asn105 contribute to the NADP(+) site; that span reads GTGALG. A substrate-binding site is contributed by Asn105. Residue Lys192 is the Proton donor of the active site. The substrate site is built by Asn196, Asn200, and Ser262. Glu274 contributes to the NADP(+) binding site.

The protein belongs to the ketopantoate reductase family.

The protein resides in the cytoplasm. The catalysed reaction is (R)-pantoate + NADP(+) = 2-dehydropantoate + NADPH + H(+). It participates in cofactor biosynthesis; (R)-pantothenate biosynthesis; (R)-pantoate from 3-methyl-2-oxobutanoate: step 2/2. Functionally, catalyzes the NADPH-dependent reduction of ketopantoate into pantoic acid. This chain is 2-dehydropantoate 2-reductase, found in Nostoc sp. (strain PCC 7120 / SAG 25.82 / UTEX 2576).